A 172-amino-acid polypeptide reads, in one-letter code: Small ribosomal subunit protein uS5 (172 aa).

Residues 15 to 78 (LNDKLIFINR…ANAKRNLSRI (64 aa)) enclose the S5 DRBM domain.

This sequence belongs to the universal ribosomal protein uS5 family. As to quaternary structure, part of the 30S ribosomal subunit. Contacts proteins S4 and S8.

With S4 and S12 plays an important role in translational accuracy. Functionally, located at the back of the 30S subunit body where it stabilizes the conformation of the head with respect to the body. This is Small ribosomal subunit protein uS5 from Dehalococcoides mccartyi (strain CBDB1).